Here is a 555-residue protein sequence, read N- to C-terminus: T-complex protein 1 subunit gamma (555 aa).

Residues 527 to 555 (KKKQAPGSGPSKPTIETEGDADNEQILPD) form a disordered region.

Belongs to the TCP-1 chaperonin family. In terms of assembly, heterooligomeric complex of about 850 to 900 kDa that forms two stacked rings, 12 to 16 nm in diameter. Interacts with CCT8.

Its subcellular location is the cytoplasm. In terms of biological role, molecular chaperone; assists the folding of proteins upon ATP hydrolysis. Known to play a role, in vitro, in the folding of actin and tubulin. This chain is T-complex protein 1 subunit gamma, found in Arabidopsis thaliana (Mouse-ear cress).